The primary structure comprises 631 residues: 1-deoxy-D-xylulose-5-phosphate synthase (631 aa).

Thiamine diphosphate is bound by residues His87 and 128–130 (GHS). Asp159 provides a ligand contact to Mg(2+). Thiamine diphosphate is bound by residues 160-161 (GA), Asn188, Phe295, and Glu377. Residue Asn188 participates in Mg(2+) binding.

It belongs to the transketolase family. DXPS subfamily. Homodimer. Mg(2+) serves as cofactor. It depends on thiamine diphosphate as a cofactor.

The enzyme catalyses D-glyceraldehyde 3-phosphate + pyruvate + H(+) = 1-deoxy-D-xylulose 5-phosphate + CO2. It participates in metabolic intermediate biosynthesis; 1-deoxy-D-xylulose 5-phosphate biosynthesis; 1-deoxy-D-xylulose 5-phosphate from D-glyceraldehyde 3-phosphate and pyruvate: step 1/1. In terms of biological role, catalyzes the acyloin condensation reaction between C atoms 2 and 3 of pyruvate and glyceraldehyde 3-phosphate to yield 1-deoxy-D-xylulose-5-phosphate (DXP). This chain is 1-deoxy-D-xylulose-5-phosphate synthase, found in Pseudomonas putida (strain GB-1).